We begin with the raw amino-acid sequence, 368 residues long: 3-isopropylmalate dehydrogenase (368 aa).

79 to 91 is a binding site for NAD(+); sequence GPEWGTSSTVRPE. The substrate site is built by Arg98, Arg108, Arg137, and Asp226. The Mg(2+) site is built by Asp226, Asp251, and Asp255. 291 to 303 is an NAD(+) binding site; that stretch reads GSAPDISGKGIVN.

The protein belongs to the isocitrate and isopropylmalate dehydrogenases family. As to quaternary structure, homodimer. Mg(2+) serves as cofactor. Requires Mn(2+) as cofactor.

The protein resides in the cytoplasm. It catalyses the reaction (2R,3S)-3-isopropylmalate + NAD(+) = 4-methyl-2-oxopentanoate + CO2 + NADH. The protein operates within amino-acid biosynthesis; L-leucine biosynthesis; L-leucine from 3-methyl-2-oxobutanoate: step 3/4. In terms of biological role, catalyzes the oxidation of 3-carboxy-2-hydroxy-4-methylpentanoate (3-isopropylmalate) to 3-carboxy-4-methyl-2-oxopentanoate. The product decarboxylates to 4-methyl-2 oxopentanoate. This is 3-isopropylmalate dehydrogenase (leu-1) from Neurospora crassa (strain ATCC 24698 / 74-OR23-1A / CBS 708.71 / DSM 1257 / FGSC 987).